Consider the following 171-residue polypeptide: NADH-quinone oxidoreductase subunit C (171 aa).

Belongs to the complex I 30 kDa subunit family. As to quaternary structure, NDH-1 is composed of 14 different subunits. Subunits NuoB, C, D, E, F, and G constitute the peripheral sector of the complex.

The protein resides in the cell membrane. The enzyme catalyses a quinone + NADH + 5 H(+)(in) = a quinol + NAD(+) + 4 H(+)(out). NDH-1 shuttles electrons from NADH, via FMN and iron-sulfur (Fe-S) centers, to quinones in the respiratory chain. The immediate electron acceptor for the enzyme in this species is believed to be ubiquinone. Couples the redox reaction to proton translocation (for every two electrons transferred, four hydrogen ions are translocated across the cytoplasmic membrane), and thus conserves the redox energy in a proton gradient. The sequence is that of NADH-quinone oxidoreductase subunit C from Herpetosiphon aurantiacus (strain ATCC 23779 / DSM 785 / 114-95).